Reading from the N-terminus, the 437-residue chain is Transcription factor E2F1 (437 aa).

Disordered stretches follow at residues 42 to 87 (ASAP…GRPP) and 101 to 128 (LAES…KSRY). The tract at residues 67 to 108 (ATPQAPRPTPSAPRPALGRPPVKRRLDLETDHQYLAESSGPA) is cyclin A:CDK2 binding. The interaction with BIRC2/c-IAP1 stretch occupies residues 89 to 191 (KRRLDLETDH…KKSKNHIQWL (103 aa)). Residues 110-194 (GRGRHPGKGV…KNHIQWLGSH (85 aa)) mediate DNA binding. 3 positions are modified to N6-acetyllysine: Lys117, Lys120, and Lys125. The interval 153–174 (LNWAAEVLKVQKRRIYDITNVL) is leucine-zipper. Residues 158–194 (EVLKVQKRRIYDITNVLEGIQLIAKKSKNHIQWLGSH) carry the DEF box motif. Residue Lys185 is modified to N6-methyllysine; by SETD7. Positions 192–382 (GSHTTVGVGG…RLSPLVAADS (191 aa)) are required for interaction with TRIM28. The dimerization stretch occupies residues 195–284 (TTVGVGGRLE…AVDSSENFQI (90 aa)). A disordered region spans residues 300–349 (EETVGGISPGKTPSQEVTSEEENRATDSATIVSPPPSSPPSSLTTDPSQS). Positions 339 to 349 (PSSLTTDPSQS) are enriched in low complexity. At Ser364 the chain carries Phosphoserine; by CHEK2. Residues 368–437 (PVDEDRLSPL…DFGDLTPLDF (70 aa)) are transactivation. Residue Ser375 is modified to Phosphoserine. Ser403 is modified (phosphoserine; by GSK3-beta). Positions 409-426 (LDYHFGLEEGEGIRDLFD) are RB1 binding. A Phosphothreonine; by GSK3-beta modification is found at Thr433.

This sequence belongs to the E2F/DP family. Component of the DRTF1/E2F transcription factor complex. Forms heterodimers with DP family members. The E2F1 complex binds specifically hypophosphorylated RB1, the interaction represses E2F1-driven transcription. During the cell cycle, RB1 becomes phosphorylated in mid-to-late G1 phase, detaches from the DRTF1/E2F complex, rendering E2F transcriptionally active. Viral oncoproteins, notably E1A, T-antigen and HPV E7, are capable of sequestering RB1, thus releasing the active complex. Interacts with TRRAP, which probably mediates its interaction with histone acetyltransferase complexes, leading to transcription activation. Binds TOPBP1 and EAPP. Interacts with ARID3A. Interacts with TRIM28; the interaction inhibits E2F1 acetylation through recruiting HDAC1 and represses its transcriptional activity. Interaction with KAT2B; the interaction acetylates E2F1 enhancing its DNA-binding and transcriptional activity. Interacts with BIRC2/c-IAP1 (via BIR domains). The complex TFDP1:E2F1 interacts with CEBPA; the interaction prevents CEBPA binding to target genes promoters and represses its transcriptional activity. Interacts with RRP1B. Interacts with HCFC1. Interacts with KMT2E; the interaction is probably indirect and is mediated via HCFC1. Interacts with DCAF5 and L3MBTL3; the interaction requires methylation at Lys-185 and is necessary to target E2F1 for ubiquitination by the CRL4-DCAF5 E3 ubiquitin ligase complex. In terms of assembly, (Microbial infection) Interacts with human cytomegalovirus/HHV-5 protein UL123. In terms of processing, phosphorylated by CDK2 and cyclin A-CDK2 in the S-phase. Phosphorylation at Ser-364 by CHEK2 stabilizes E2F1 upon DNA damage and regulates its effect on transcription and apoptosis. Phosphorylation at Ser-403 by GSK3B promotes interaction with USP11, leading to its deubiquitination and stabilization. Post-translationally, ubiquitinated via 'Lys-63'-linked ubiquitin, leading to its degradation. Deubiquitinated by USP11 following phosphorylation by GSK3B, promoting its stability. Acetylation stimulates DNA-binding. Enhanced under stress conditions such as DNA damage and inhibited by retinoblastoma protein RB1. Regulated by KAP1/TRIM28 which recruits HDAC1 to E2F1 resulting in deacetylation. Acetylated by P/CAF/KAT2B. In terms of processing, methylation at Lys-185 by SETD7 promotes E2F1 ubiquitin-dependent proteasomal degradation.

It localises to the nucleus. BIRC2/c-IAP1 stimulates its transcriptional activity. Its function is as follows. Transcription activator that binds DNA cooperatively with DP proteins through the E2 recognition site, 5'-TTTC[CG]CGC-3' found in the promoter region of a number of genes whose products are involved in cell cycle regulation or in DNA replication. The DRTF1/E2F complex functions in the control of cell-cycle progression from G1 to S phase. E2F1 binds preferentially RB1 in a cell-cycle dependent manner. It can mediate both cell proliferation and TP53/p53-dependent apoptosis. Blocks adipocyte differentiation by binding to specific promoters repressing CEBPA binding to its target gene promoters. Directly activates transcription of PEG10. Positively regulates transcription of RRP1B. The polypeptide is Transcription factor E2F1 (Homo sapiens (Human)).